We begin with the raw amino-acid sequence, 305 residues long: Autophagy-related protein 14 (305 aa).

Positions 34–147 form a coiled coil; it reads KMNLLILRQE…LDTLSHILAR (114 aa).

Belongs to the ATG14 family. In terms of assembly, component of the autophagy-specific VPS34 PI3-kinase complex I.

The protein resides in the preautophagosomal structure membrane. The protein localises to the vacuole membrane. Its function is as follows. Required for cytoplasm to vacuole transport (Cvt) and autophagy as a part of the autophagy-specific VPS34 PI3-kinase complex I. This complex is essential to recruit the ATG8-phosphatidylinositol conjugate and the ATG12-ATG5 conjugate to the pre-autophagosomal structure. ATG14 mediates the specific binding of the VPS34 PI3-kinase complex I to the preautophagosomal structure (PAS). The sequence is that of Autophagy-related protein 14 from Kluyveromyces marxianus (strain DMKU3-1042 / BCC 29191 / NBRC 104275) (Yeast).